Here is a 481-residue protein sequence, read N- to C-terminus: Flavonol 3-O-glucosyltransferase UGT71C1 (481 aa).

The active-site Proton acceptor is H19. H19 provides a ligand contact to an anthocyanidin. The active-site Charge relay is the D131. UDP-alpha-D-glucose is bound by residues T153, A352, Q354, H369, W372, N373, S374, and E377. A392 contributes to the an anthocyanidin binding site. Residues E393 and Q394 each coordinate UDP-alpha-D-glucose.

The protein belongs to the UDP-glycosyltransferase family.

It catalyses the reaction a flavonol + UDP-alpha-D-glucose = a flavonol 3-O-beta-D-glucoside + UDP + H(+). The catalysed reaction is a 7-O-hydroxy-flavonol + UDP-alpha-D-glucose = a flavonol 7-O-beta-D-glucoside + UDP + H(+). Possesses quercetin 7-O-glucosyltransferase and 3'-O-glucosyltransferase activities in vitro. Also active in vitro on benzoates and benzoate derivatives. Glucosylates other secondary metabolites in vitro like trans-resveratrol, curcumin, vanillin and etoposide. The sequence is that of Flavonol 3-O-glucosyltransferase UGT71C1 from Arabidopsis thaliana (Mouse-ear cress).